Here is an 86-residue protein sequence, read N- to C-terminus: MPFIFVVSFAILACIVVDTANHKGRGRPAKCKLPPDDGPCRARIPSYYFDRKTKTCKEFMYGGCEGNENNFENITTCQEECRAKKV.

Positions 1-19 are cleaved as a signal peptide; the sequence is MPFIFVVSFAILACIVVDT. Residues 31–81 form the BPTI/Kunitz inhibitor domain; that stretch reads CKLPPDDGPCRARIPSYYFDRKTKTCKEFMYGGCEGNENNFENITTCQEEC. 3 disulfide bridges follow: Cys-31-Cys-81, Cys-40-Cys-64, and Cys-56-Cys-77. The N-linked (GlcNAc...) asparagine glycan is linked to Asn-73.

In terms of tissue distribution, salivary gland.

The protein resides in the secreted. Functionally, anticoagulant protein. Increases fibrinolysis time. Inhibits thrombin generation. Inhibits the generation of the active forms of host coagulation factor XII, factor XI and plasma kallikrein. The sequence is that of Kunitz-type anticoagulant protein Ir-CPI from Ixodes ricinus (Common tick).